Reading from the N-terminus, the 107-residue chain is Thioredoxin-1 (107 aa).

Positions A2–K106 constitute a Thioredoxin domain. Catalysis depends on nucleophile residues C31 and C34. C31 and C34 form a disulfide bridge.

It belongs to the thioredoxin family.

It is found in the nucleus. Participates in various redox reactions through the reversible oxidation of its active center dithiol to a disulfide and catalyzes dithiol-disulfide exchange reactions. As a reducing substrate of peroxiredoxin 1, thioredoxin 2 is preferred over thioredoxin 1. Required for female meiosis and early embryonic development. This chain is Thioredoxin-1 (dhd), found in Drosophila yakuba (Fruit fly).